The chain runs to 345 residues: Histidinol-phosphate aminotransferase (345 aa).

Lysine 205 is modified (N6-(pyridoxal phosphate)lysine).

Belongs to the class-II pyridoxal-phosphate-dependent aminotransferase family. Histidinol-phosphate aminotransferase subfamily. Homodimer. The cofactor is pyridoxal 5'-phosphate.

It catalyses the reaction L-histidinol phosphate + 2-oxoglutarate = 3-(imidazol-4-yl)-2-oxopropyl phosphate + L-glutamate. It functions in the pathway amino-acid biosynthesis; L-histidine biosynthesis; L-histidine from 5-phospho-alpha-D-ribose 1-diphosphate: step 7/9. This is Histidinol-phosphate aminotransferase from Parabacteroides distasonis (strain ATCC 8503 / DSM 20701 / CIP 104284 / JCM 5825 / NCTC 11152).